Consider the following 155-residue polypeptide: S-ribosylhomocysteine lyase (155 aa).

3 residues coordinate Fe cation: His54, His58, and Cys122.

The protein belongs to the LuxS family. As to quaternary structure, homodimer. Fe cation serves as cofactor.

The catalysed reaction is S-(5-deoxy-D-ribos-5-yl)-L-homocysteine = (S)-4,5-dihydroxypentane-2,3-dione + L-homocysteine. Functionally, involved in the synthesis of autoinducer 2 (AI-2) which is secreted by bacteria and is used to communicate both the cell density and the metabolic potential of the environment. The regulation of gene expression in response to changes in cell density is called quorum sensing. Catalyzes the transformation of S-ribosylhomocysteine (RHC) to homocysteine (HC) and 4,5-dihydroxy-2,3-pentadione (DPD). The polypeptide is S-ribosylhomocysteine lyase (Deinococcus deserti (strain DSM 17065 / CIP 109153 / LMG 22923 / VCD115)).